The primary structure comprises 583 residues: uncharacterized protein (583 aa).

The segment covering 1-38 (MGQGESIPSRQIQRDASMQAVSSESENINDSDRQNSGF) has biased composition (polar residues). 4 disordered regions span residues 1–39 (MGQGESIPSRQIQRDASMQAVSSESENINDSDRQNSGFS), 53–124 (GLRR…AIPQ), 156–197 (TQNN…TAIG), and 362–452 (NSGS…QTDH). Basic and acidic residues predominate over residues 70 to 80 (GNRDRTTERSA). Residues 88–102 (SLLNRNSPSLRSLSP) show a composition bias toward low complexity. Polar residues-rich tracts occupy residues 156-165 (TQNNQSTLAS), 172-191 (VSSSGGQEMQDHGSVNNLES), 384-408 (LISSLVNSQNQTTSVSDNTGPNENV), and 420-452 (ASTATDVNGISDNNGSSTQQAPETRNNNSQTDH). The segment at 525-568 (CLVCLSNFELNDECRRLKQCNHFFHRECIDQWLTSSQNSCPLCR) adopts an RING-type zinc-finger fold. Phosphoserine is present on Ser-580.

The protein resides in the membrane. This is an uncharacterized protein from Schizosaccharomyces pombe (strain 972 / ATCC 24843) (Fission yeast).